We begin with the raw amino-acid sequence, 374 residues long: Eukaryotic translation initiation factor 3 subunit M (374 aa).

In terms of domain architecture, PCI spans 180–339 (TAAKVMVELL…RKVVVSHSTH (160 aa)).

The protein belongs to the eIF-3 subunit M family. In terms of assembly, component of the eukaryotic translation initiation factor 3 (eIF-3) complex, which is composed of 13 subunits: EIF3A, EIF3B, EIF3C, EIF3D, EIF3E, EIF3F, EIF3G, EIF3H, EIF3I, EIF3J, EIF3K, EIF3L and EIF3M.

The protein resides in the cytoplasm. Its function is as follows. Component of the eukaryotic translation initiation factor 3 (eIF-3) complex, which is involved in protein synthesis of a specialized repertoire of mRNAs and, together with other initiation factors, stimulates binding of mRNA and methionyl-tRNAi to the 40S ribosome. The eIF-3 complex specifically targets and initiates translation of a subset of mRNAs involved in cell proliferation. In Gallus gallus (Chicken), this protein is Eukaryotic translation initiation factor 3 subunit M.